The sequence spans 178 residues: ATP synthase subunit delta (178 aa).

The protein belongs to the ATPase delta chain family. As to quaternary structure, F-type ATPases have 2 components, F(1) - the catalytic core - and F(0) - the membrane proton channel. F(1) has five subunits: alpha(3), beta(3), gamma(1), delta(1), epsilon(1). F(0) has three main subunits: a(1), b(2) and c(10-14). The alpha and beta chains form an alternating ring which encloses part of the gamma chain. F(1) is attached to F(0) by a central stalk formed by the gamma and epsilon chains, while a peripheral stalk is formed by the delta and b chains.

Its subcellular location is the cell membrane. Functionally, f(1)F(0) ATP synthase produces ATP from ADP in the presence of a proton or sodium gradient. F-type ATPases consist of two structural domains, F(1) containing the extramembraneous catalytic core and F(0) containing the membrane proton channel, linked together by a central stalk and a peripheral stalk. During catalysis, ATP synthesis in the catalytic domain of F(1) is coupled via a rotary mechanism of the central stalk subunits to proton translocation. Its function is as follows. This protein is part of the stalk that links CF(0) to CF(1). It either transmits conformational changes from CF(0) to CF(1) or is implicated in proton conduction. This Streptococcus equinus (Streptococcus bovis) protein is ATP synthase subunit delta.